Here is a 94-residue protein sequence, read N- to C-terminus: Co-chaperonin GroES (94 aa).

Belongs to the GroES chaperonin family. In terms of assembly, heptamer of 7 subunits arranged in a ring. Interacts with the chaperonin GroEL.

Its subcellular location is the cytoplasm. Its function is as follows. Together with the chaperonin GroEL, plays an essential role in assisting protein folding. The GroEL-GroES system forms a nano-cage that allows encapsulation of the non-native substrate proteins and provides a physical environment optimized to promote and accelerate protein folding. GroES binds to the apical surface of the GroEL ring, thereby capping the opening of the GroEL channel. In Finegoldia magna (strain ATCC 29328 / DSM 20472 / WAL 2508) (Peptostreptococcus magnus), this protein is Co-chaperonin GroES.